A 109-amino-acid chain; its full sequence is Ribonuclease P protein component 2 (109 aa).

This sequence belongs to the eukaryotic/archaeal RNase P protein component 2 family. As to quaternary structure, consists of a catalytic RNA component and at least 4-5 protein subunits.

Its subcellular location is the cytoplasm. The catalysed reaction is Endonucleolytic cleavage of RNA, removing 5'-extranucleotides from tRNA precursor.. Its function is as follows. Part of ribonuclease P, a protein complex that generates mature tRNA molecules by cleaving their 5'-ends. This chain is Ribonuclease P protein component 2, found in Archaeoglobus fulgidus (strain ATCC 49558 / DSM 4304 / JCM 9628 / NBRC 100126 / VC-16).